A 149-amino-acid polypeptide reads, in one-letter code: MKKDTTPKFHKLHVKTGDTVQIIAGKDKGKVGEVIKALPQLSKVVVKGVNIKTKQIIAGKDKGKVGEVIKALPQLSKVVVKGVNIKTKHVKPQQEGESGRIVTQEAPIHSSNVMLYSTKQNVASRVCYTFTAEGKKVRKLKKTGEILDN.

This sequence belongs to the universal ribosomal protein uL24 family. As to quaternary structure, part of the 50S ribosomal subunit.

Functionally, one of two assembly initiator proteins, it binds directly to the 5'-end of the 23S rRNA, where it nucleates assembly of the 50S subunit. Its function is as follows. One of the proteins that surrounds the polypeptide exit tunnel on the outside of the subunit. The chain is Large ribosomal subunit protein uL24 from Nostoc sp. (strain PCC 7120 / SAG 25.82 / UTEX 2576).